The chain runs to 1545 residues: Pentafunctional AROM polypeptide (1545 aa).

The segment at 1–383 is 3-dehydroquinate synthase; that stretch reads MSGLIEKVSI…YEPKASYVND (383 aa). Residues 44–46, 82–85, 113–115, and aspartate 118 each bind NAD(+); these read DSN, EANK, and GGV. Arginine 129 lines the 7-phospho-2-dehydro-3-deoxy-D-arabino-heptonate pocket. 138-139 contributes to the NAD(+) binding site; it reads TS. Positions 145 and 151 each coordinate 7-phospho-2-dehydro-3-deoxy-D-arabino-heptonate. Lysine 160 is a binding site for NAD(+). Asparagine 161 contributes to the 7-phospho-2-dehydro-3-deoxy-D-arabino-heptonate binding site. NAD(+)-binding positions include 178–181 and asparagine 189; that span reads FLET. Position 193 (glutamate 193) interacts with Zn(2+). Residues 193-196 and lysine 249 each bind 7-phospho-2-dehydro-3-deoxy-D-arabino-heptonate; that span reads EVVK. Glutamate 259 acts as the Proton acceptor; for 3-dehydroquinate synthase activity in catalysis. 7-phospho-2-dehydro-3-deoxy-D-arabino-heptonate contacts are provided by residues 263 to 267 and histidine 270; that span reads RNLLN. Histidine 270 is a binding site for Zn(2+). Histidine 274 functions as the Proton acceptor; for 3-dehydroquinate synthase activity in the catalytic mechanism. 2 residues coordinate 7-phospho-2-dehydro-3-deoxy-D-arabino-heptonate: histidine 286 and lysine 355. Histidine 286 serves as a coordination point for Zn(2+). The EPSP synthase stretch occupies residues 396–840; it reads VKDFNSAPST…WDILHTTFNV (445 aa). The For EPSP synthase activity role is filled by cysteine 822. The interval 859-1049 is shikimate kinase; the sequence is DKSIIVIGMR…IPNGRSAFVC (191 aa). Residue 866–873 coordinates ATP; the sequence is GMRAAGKS. A 3-dehydroquinase region spans residues 1050 to 1261; that stretch reads LTYEDLAPVS…AAPGQLTLKE (212 aa). The active-site Proton acceptor; for 3-dehydroquinate dehydratase activity is the histidine 1166. The active-site Schiff-base intermediate with substrate; for 3-dehydroquinate dehydratase activity is the lysine 1195. Positions 1274-1545 are shikimate dehydrogenase; sequence RKKFYIVGKP…GYQFSSHIDL (272 aa).

The protein in the N-terminal section; belongs to the sugar phosphate cyclases superfamily. Dehydroquinate synthase family. In the 2nd section; belongs to the EPSP synthase family. It in the 3rd section; belongs to the shikimate kinase family. This sequence in the 4th section; belongs to the type-I 3-dehydroquinase family. The protein in the C-terminal section; belongs to the shikimate dehydrogenase family. In terms of assembly, homodimer. Requires Zn(2+) as cofactor.

It is found in the cytoplasm. It catalyses the reaction 7-phospho-2-dehydro-3-deoxy-D-arabino-heptonate = 3-dehydroquinate + phosphate. It carries out the reaction 3-dehydroquinate = 3-dehydroshikimate + H2O. The enzyme catalyses shikimate + NADP(+) = 3-dehydroshikimate + NADPH + H(+). The catalysed reaction is shikimate + ATP = 3-phosphoshikimate + ADP + H(+). It catalyses the reaction 3-phosphoshikimate + phosphoenolpyruvate = 5-O-(1-carboxyvinyl)-3-phosphoshikimate + phosphate. The protein operates within metabolic intermediate biosynthesis; chorismate biosynthesis; chorismate from D-erythrose 4-phosphate and phosphoenolpyruvate: step 2/7. It participates in metabolic intermediate biosynthesis; chorismate biosynthesis; chorismate from D-erythrose 4-phosphate and phosphoenolpyruvate: step 3/7. Its pathway is metabolic intermediate biosynthesis; chorismate biosynthesis; chorismate from D-erythrose 4-phosphate and phosphoenolpyruvate: step 4/7. It functions in the pathway metabolic intermediate biosynthesis; chorismate biosynthesis; chorismate from D-erythrose 4-phosphate and phosphoenolpyruvate: step 5/7. The protein operates within metabolic intermediate biosynthesis; chorismate biosynthesis; chorismate from D-erythrose 4-phosphate and phosphoenolpyruvate: step 6/7. The AROM polypeptide catalyzes 5 consecutive enzymatic reactions in prechorismate polyaromatic amino acid biosynthesis. The protein is Pentafunctional AROM polypeptide of Komagataella phaffii (strain GS115 / ATCC 20864) (Yeast).